Consider the following 201-residue polypeptide: 3-isopropylmalate dehydratase small subunit (201 aa).

The protein belongs to the LeuD family. LeuD type 1 subfamily. Heterodimer of LeuC and LeuD.

The enzyme catalyses (2R,3S)-3-isopropylmalate = (2S)-2-isopropylmalate. It participates in amino-acid biosynthesis; L-leucine biosynthesis; L-leucine from 3-methyl-2-oxobutanoate: step 2/4. Functionally, catalyzes the isomerization between 2-isopropylmalate and 3-isopropylmalate, via the formation of 2-isopropylmaleate. The sequence is that of 3-isopropylmalate dehydratase small subunit from Cytophaga hutchinsonii (strain ATCC 33406 / DSM 1761 / CIP 103989 / NBRC 15051 / NCIMB 9469 / D465).